A 414-amino-acid chain; its full sequence is MAAPSSLASSSHLSRRATAAASPSIPPPSPPPPPQRLRCGWVGRAAPPTRRAPGVCSVVSPSKPGVAAVDVPAATIPDAAATGVGVAERISVSSLLEVVADDLLKLNNNLKSLVGAENPVLVSAAEQIFGAGGKRLRPALVFLVSRATAELAGLLELTTEHQRLAEIIEMIHTASLIHDDVIDDSGMRRGKETIHQLYGTRVAVLAGDFMFAQSSWFLANLENIEVIKLISQVIKDFASGEIKQASTLFDCDITLDDYLLKSYYKTASLIAASTRSAAIFSGVSTAICEQMYEYGRNLGLSFQVVDDILDFTQSAEQLGKPAGSDLAKGNLTAPVIFALQDEPQLREIIDSEFSETNSLATAIELVHRSGGIKRAHELAREKGEIAIQSLQCLPRSEFRSTLENMVKYNLERID.

A compositionally biased stretch (low complexity) spans 1–23 (MAAPSSLASSSHLSRRATAAASP). The interval 1 to 36 (MAAPSSLASSSHLSRRATAAASPSIPPPSPPPPPQR) is disordered. Residues 1 to 72 (MAAPSSLASS…KPGVAAVDVP (72 aa)) constitute a chloroplast transit peptide. Residues 24–35 (SIPPPSPPPPPQ) are compositionally biased toward pro residues. Residues K134, R137, and H172 each coordinate isopentenyl diphosphate. D179 and D183 together coordinate Mg(2+). R188 is an an all-trans-polyprenyl diphosphate binding site. Isopentenyl diphosphate is bound at residue R189. An all-trans-polyprenyl diphosphate is bound by residues K265, T266, Q303, and K320.

Belongs to the FPP/GGPP synthase family. Homodimer. It depends on Mg(2+) as a cofactor.

It localises to the plastid. Its subcellular location is the chloroplast. It carries out the reaction 7 isopentenyl diphosphate + (2E)-geranyl diphosphate = all-trans-nonaprenyl diphosphate + 7 diphosphate. In terms of biological role, involved in providing solanesyl diphosphate for plastoquinone-9 (PQ-9) formation. The protein is Probable solanesyl-diphosphate synthase 3, chloroplastic of Oryza sativa subsp. japonica (Rice).